The sequence spans 189 residues: UPF0494 membrane protein C977.06 (189 aa).

The next 3 membrane-spanning stretches (helical) occupy residues 78-98 (WPLL…NFEV), 120-140 (IWGP…GLIY), and 148-168 (AIPL…VAMV).

The protein belongs to the UPF0494 family.

It is found in the membrane. The polypeptide is UPF0494 membrane protein C977.06 (Schizosaccharomyces pombe (strain 972 / ATCC 24843) (Fission yeast)).